The chain runs to 326 residues: Cobalamin biosynthesis protein CobD (326 aa).

A run of 4 helical transmembrane segments spans residues 58–78, 81–101, 157–177, and 304–324; these read MRGV…GVVL, LFDV…AVFL, FSDG…PGLL, and VFYR…LPFL.

This sequence belongs to the CobD/CbiB family.

Its subcellular location is the cell membrane. It functions in the pathway cofactor biosynthesis; adenosylcobalamin biosynthesis. Functionally, converts cobyric acid to cobinamide by the addition of aminopropanol on the F carboxylic group. This Sinorhizobium fredii (strain NBRC 101917 / NGR234) protein is Cobalamin biosynthesis protein CobD.